Reading from the N-terminus, the 1459-residue chain is Endogenous retrovirus group K member 7 Pol protein (1459 aa).

The Reverse transcriptase domain maps to 57–245; sequence LEKGHIEPSF…TPFHYLGMQI (189 aa). Positions 161-164 match the LPQG motif; it reads LPQG. Residues 195–198 carry the YXDD motif; that stretch reads YIDD. The RNase H type-1 domain occupies 460-590; it reads LENALTVFTD…ADLLVSSALI (131 aa). Residues D469, E497, D517, and D582 each contribute to the Mg(2+) site. The segment at 587-628 adopts an Integrase-type zinc-finger fold; the sequence is SALIKAQELHALTHVNAAGLKNKFDVTWKQAKDIVQHCTQCQ. Residues H596, H600, C624, and C627 each coordinate Zn(2+). The Integrase catalytic domain occupies 642 to 803; it reads RGLCPNALWQ…TSAEQHLTGK (162 aa). The segment at residues 811–859 is a DNA-binding region (integrase-type); sequence KLIWWKDNKNKTWEIGKVITWGRGFACVSPGENQLPVWIPTRHLKFYNE.

It belongs to the beta type-B retroviral polymerase family. HERV class-II K(HML-2) pol subfamily.

It catalyses the reaction DNA(n) + a 2'-deoxyribonucleoside 5'-triphosphate = DNA(n+1) + diphosphate. It carries out the reaction Endonucleolytic cleavage to 5'-phosphomonoester.. Early post-infection, the reverse transcriptase converts the viral RNA genome into double-stranded viral DNA. The RNase H domain of the reverse transcriptase performs two functions. It degrades the RNA template and specifically removes the RNA primer from the RNA/DNA hybrid. Following nuclear import, the integrase catalyzes the insertion of the linear, double-stranded viral DNA into the host cell chromosome. Endogenous Pol proteins may have kept, lost or modified their original function during evolution. The chain is Endogenous retrovirus group K member 7 Pol protein (ERVK-7) from Homo sapiens (Human).